The following is a 1153-amino-acid chain: Cytosolic carboxypeptidase 1 (1153 aa).

Positions 357-400 are disordered; the sequence is NQPPGVDDVVDESDENEATEVDTENDTENEEDDTGHKTQNDDIE. A compositionally biased stretch (acidic residues) spans 364-389; sequence DVVDESDENEATEVDTENDTENEEDD. The 290-residue stretch at 774 to 1063 folds into the Peptidase M14 domain; the sequence is YPYTYSMLKM…QFCLALLRLR (290 aa). 3 residues coordinate Zn(2+): His845, Glu848, and His942. Residue Glu1027 is the Proton donor/acceptor of the active site. The segment covering 1108–1128 has biased composition (acidic residues); that stretch reads AFLEEVDYSAESNDENDPELE. Residues 1108–1153 form a disordered region; the sequence is AFLEEVDYSAESNDENDPELEPDLRDNHALPDPSSDSELSHQDSLT. Residues 1141–1153 are compositionally biased toward polar residues; that stretch reads SSDSELSHQDSLT.

The protein belongs to the peptidase M14 family. It depends on Zn(2+) as a cofactor.

The protein resides in the cytoplasm. It localises to the cytosol. Its subcellular location is the nucleus. It is found in the mitochondrion. It catalyses the reaction (L-glutamyl)(n+1)-gamma-L-glutamyl-L-glutamyl-[protein] + H2O = (L-glutamyl)(n)-gamma-L-glutamyl-L-glutamyl-[protein] + L-glutamate. The catalysed reaction is C-terminal L-alpha-aminoacyl-L-glutamyl-L-glutamyl-[tubulin] + H2O = C-terminal L-alpha-aminoacyl-L-glutamyl-[tubulin] + L-glutamate. Metallocarboxypeptidase that mediates protein deglutamylation of tubulin and non-tubulin target proteins. Catalyzes the removal of polyglutamate side chains present on the gamma-carboxyl group of glutamate residues within the C-terminal tail of alpha- and beta-tubulin. Specifically cleaves tubulin long-side-chains, while it is not able to remove the branching point glutamate. Also catalyzes the removal of polyglutamate residues from the carboxy-terminus of alpha-tubulin as well as non-tubulin proteins. The polypeptide is Cytosolic carboxypeptidase 1 (agtpbp1) (Danio rerio (Zebrafish)).